The sequence spans 127 residues: Small ribosomal subunit protein uS12 (127 aa).

At D89 the chain carries 3-methylthioaspartic acid.

It belongs to the universal ribosomal protein uS12 family. In terms of assembly, part of the 30S ribosomal subunit. Contacts proteins S8 and S17. May interact with IF1 in the 30S initiation complex.

With S4 and S5 plays an important role in translational accuracy. Its function is as follows. Interacts with and stabilizes bases of the 16S rRNA that are involved in tRNA selection in the A site and with the mRNA backbone. Located at the interface of the 30S and 50S subunits, it traverses the body of the 30S subunit contacting proteins on the other side and probably holding the rRNA structure together. The combined cluster of proteins S8, S12 and S17 appears to hold together the shoulder and platform of the 30S subunit. In Nautilia profundicola (strain ATCC BAA-1463 / DSM 18972 / AmH), this protein is Small ribosomal subunit protein uS12.